Reading from the N-terminus, the 252-residue chain is Adenosine 5'-phosphosulfate reductase (252 aa).

[4Fe-4S] cluster-binding residues include cysteine 125, cysteine 126, cysteine 208, and cysteine 211. Residues 219 to 252 (DGYSREGRWSDRDKTECGLHTSPEDEDGAHAAES) are disordered. The segment covering 221–235 (YSREGRWSDRDKTEC) has biased composition (basic and acidic residues). The active-site Nucleophile; cysteine thiosulfonate intermediate is the cysteine 235.

This sequence belongs to the PAPS reductase family. CysH subfamily. It depends on [4Fe-4S] cluster as a cofactor.

The protein resides in the cytoplasm. It carries out the reaction [thioredoxin]-disulfide + sulfite + AMP + 2 H(+) = adenosine 5'-phosphosulfate + [thioredoxin]-dithiol. Its pathway is sulfur metabolism; hydrogen sulfide biosynthesis; sulfite from sulfate. In terms of biological role, catalyzes the formation of sulfite from adenosine 5'-phosphosulfate (APS) using thioredoxin as an electron donor. This chain is Adenosine 5'-phosphosulfate reductase, found in Salinibacter ruber (strain DSM 13855 / M31).